Consider the following 219-residue polypeptide: NADH-ubiquinone oxidoreductase 23 kDa subunit, mitochondrial (219 aa).

2 4Fe-4S ferredoxin-type domains span residues 111 to 140 (RRYPSGEERCIACKLCEAVCPAQAITIEAE) and 150 to 179 (TRYDIDMTKCIYCGFCQESCPVDAIVESPN). [4Fe-4S] cluster is bound by residues Cys-120, Cys-123, Cys-126, Cys-130, Cys-159, Cys-162, Cys-165, and Cys-169.

Belongs to the complex I 23 kDa subunit family. In terms of assembly, complex I is composed of about 40 different subunits. It depends on [4Fe-4S] cluster as a cofactor.

It localises to the mitochondrion. It carries out the reaction a ubiquinone + NADH + 5 H(+)(in) = a ubiquinol + NAD(+) + 4 H(+)(out). Functionally, core subunit of the mitochondrial membrane respiratory chain NADH dehydrogenase (Complex I) that is believed to belong to the minimal assembly required for catalysis. Complex I functions in the transfer of electrons from NADH to the respiratory chain. The immediate electron acceptor for the enzyme is believed to be ubiquinone. May donate electrons to ubiquinone. In Neurospora crassa (strain ATCC 24698 / 74-OR23-1A / CBS 708.71 / DSM 1257 / FGSC 987), this protein is NADH-ubiquinone oxidoreductase 23 kDa subunit, mitochondrial (nuo21.3c).